Consider the following 121-residue polypeptide: Small ribosomal subunit protein uS11 (121 aa).

Belongs to the universal ribosomal protein uS11 family. As to quaternary structure, part of the 30S ribosomal subunit. Interacts with proteins S7 and S18. Binds to IF-3.

Functionally, located on the platform of the 30S subunit, it bridges several disparate RNA helices of the 16S rRNA. Forms part of the Shine-Dalgarno cleft in the 70S ribosome. The protein is Small ribosomal subunit protein uS11 of Mycoplasmoides gallisepticum (strain R(low / passage 15 / clone 2)) (Mycoplasma gallisepticum).